Reading from the N-terminus, the 1140-residue chain is Eukaryotic translation initiation factor 3 subunit A (1140 aa).

The region spanning L319–T502 is the PCI domain. 3 stretches are compositionally biased toward basic and acidic residues: residues Q589–E624, A830–D900, and E921–S984. 2 disordered regions span residues Q589–I632 and A830–R1140. Residues A987–A998 are compositionally biased toward low complexity. 3 stretches are compositionally biased toward basic and acidic residues: residues S999 to R1050, D1058 to Q1086, and P1109 to D1130.

This sequence belongs to the eIF-3 subunit A family. In terms of assembly, component of the eukaryotic translation initiation factor 3 (eIF-3) complex. The eIF-3 complex interacts with pix.

Its subcellular location is the cytoplasm. Functionally, RNA-binding component of the eukaryotic translation initiation factor 3 (eIF-3) complex, which is involved in protein synthesis of a specialized repertoire of mRNAs and, together with other initiation factors, stimulates binding of mRNA and methionyl-tRNAi to the 40S ribosome. The eIF-3 complex specifically targets and initiates translation of a subset of mRNAs involved in cell proliferation. The chain is Eukaryotic translation initiation factor 3 subunit A from Drosophila ananassae (Fruit fly).